The sequence spans 129 residues: Glycophorin-A (129 aa).

Residues 1–17 (MYEKIVIVLLLSGYIST) form the signal peptide. Pyrrolidone carboxylic acid is present on glutamine 18. Residues 18–82 (QDVTEIIPHE…QLVHIFSEPV (65 aa)) lie on the Extracellular side of the membrane. Serine 29 and serine 30 each carry an O-linked (GalNAc...) serine glycan. O-linked (GalNAc...) threonine glycosylation occurs at threonine 34. Serine 40 carries O-linked (GalNAc...) serine glycosylation. Threonine 41 and threonine 48 each carry an O-linked (GalNAc...) threonine glycan. Serine 56 carries O-linked (GalNAc...) serine glycosylation. Residues 83-103 (IIGIIYAVMLGIIITILSIAF) form a helical membrane-spanning segment. The Cytoplasmic portion of the chain corresponds to 104-129 (CIGQLTKKSSLPAQVASPEDVDPEVL).

The protein belongs to the glycophorin-A family. Homodimer. Component of the ankyrin-1 complex in the erythrocyte, composed of ANK1, RHCE, RHAG, SLC4A1, EPB42, GYPA, GYPB and AQP1. Interacts with SLC4A1; a GYPA monomer is bound at each end of the SLC4A1 dimer forming a heterotetramer.

Its subcellular location is the membrane. Component of the ankyrin-1 complex, a multiprotein complex involved in the stability and shape of the erythrocyte membrane. Glycophorin A is the major intrinsic membrane protein of the erythrocyte. The N-terminal glycosylated segment, which lies outside the erythrocyte membrane, has MN blood group receptors. Appears to be important for the function of SLC4A1 and is required for high activity of SLC4A1. May be involved in translocation of SLC4A1 to the plasma membrane. The chain is Glycophorin-A from Canis lupus familiaris (Dog).